A 317-amino-acid chain; its full sequence is Fruit protein pKIWI502 (317 aa).

The disordered stretch occupies residues 1–29 (MSITLSRPSLSRPSLSRHPSLTLHSSLSH). Residues 71-182 (YIWTPVPISR…TQIIGRGFDI (112 aa)) enclose the FAD-binding FR-type domain.

The chain is Fruit protein pKIWI502 from Actinidia deliciosa (Kiwi).